Reading from the N-terminus, the 544-residue chain is Nucleosome assembly protein 1-like 3 (544 aa).

Disordered regions lie at residues 1–109 (MAEA…LFLD) and 168–345 (PTEE…KKED). A compositionally biased stretch (low complexity) spans 35–83 (SNSSSSTNSCSSSGSSSSGSSSSSSSSSSSSSSSSSSSSGSSGSSSNGS). The span at 168 to 192 (PTEEECEWNSEEEFSGDEEMQDDTP) shows a compositional bias: acidic residues. Basic and acidic residues-rich tracts occupy residues 207–228 (CNEK…PEAK), 235–277 (PKET…KADS), and 314–332 (PARE…EGVN).

The protein belongs to the nucleosome assembly protein (NAP) family. Expressed in brain.

Its subcellular location is the nucleus. The protein resides in the cytoplasm. This is Nucleosome assembly protein 1-like 3 (Nap1l3) from Mus musculus (Mouse).